The sequence spans 590 residues: Aspartate--tRNA ligase (590 aa).

E172 contributes to the L-aspartate binding site. The aspartate stretch occupies residues 196–199 (QLFK). L-aspartate is bound at residue R218. ATP-binding positions include 218–220 (RDE) and Q227. L-aspartate is bound at residue H449. E483 contributes to the ATP binding site. R490 contributes to the L-aspartate binding site. Position 535-538 (535-538 (GLDR)) interacts with ATP.

This sequence belongs to the class-II aminoacyl-tRNA synthetase family. Type 1 subfamily. Homodimer.

The protein resides in the cytoplasm. The enzyme catalyses tRNA(Asp) + L-aspartate + ATP = L-aspartyl-tRNA(Asp) + AMP + diphosphate. Functionally, catalyzes the attachment of L-aspartate to tRNA(Asp) in a two-step reaction: L-aspartate is first activated by ATP to form Asp-AMP and then transferred to the acceptor end of tRNA(Asp). The polypeptide is Aspartate--tRNA ligase (Mannheimia succiniciproducens (strain KCTC 0769BP / MBEL55E)).